We begin with the raw amino-acid sequence, 318 residues long: Ribonuclease Z (318 aa).

Zn(2+) contacts are provided by histidine 63, histidine 65, aspartate 67, histidine 68, histidine 142, aspartate 210, and histidine 268. Residue aspartate 67 is the Proton acceptor of the active site.

It belongs to the RNase Z family. Homodimer. Zn(2+) serves as cofactor.

It carries out the reaction Endonucleolytic cleavage of RNA, removing extra 3' nucleotides from tRNA precursor, generating 3' termini of tRNAs. A 3'-hydroxy group is left at the tRNA terminus and a 5'-phosphoryl group is left at the trailer molecule.. Zinc phosphodiesterase, which displays some tRNA 3'-processing endonuclease activity. Probably involved in tRNA maturation, by removing a 3'-trailer from precursor tRNA. In Thermobifida fusca (strain YX), this protein is Ribonuclease Z.